Consider the following 158-residue polypeptide: uncharacterized protein (158 aa).

Helical transmembrane passes span Leu-66 to Met-86 and Phe-94 to Ile-114.

It localises to the membrane. This is an uncharacterized protein from Saccharomyces cerevisiae (strain ATCC 204508 / S288c) (Baker's yeast).